Reading from the N-terminus, the 260-residue chain is Protein phosphatase 1 regulatory subunit 35 (260 aa).

The tract at residues 1–100 (MMGFGASALE…PLLVAGAPGD (100 aa)) is disordered. A phosphoserine mark is found at serine 46 and serine 53. A compositionally biased stretch (basic residues) spans 64–76 (RKGRRGGSRRGRQ).

Belongs to the PPP1R35 family. As to quaternary structure, interacts with PPP1CA; this interaction mediates the PPP1CA phosphatase activity inhibition. Interacts with RTTN; this interaction allows the mutual recruitment to the centriole.

It localises to the cytoplasm. Its subcellular location is the cytoskeleton. The protein resides in the microtubule organizing center. The protein localises to the centrosome. It is found in the centriole. Functionally, during centriole duplication, plays a role in the centriole elongation by promoting the recruitment of the microtubule-binding elongation machinery through its interaction with TTTN, leading to the centriole to centrosome conversion. In addition may play a role in the primary cilia assembly. This is Protein phosphatase 1 regulatory subunit 35 from Mus musculus (Mouse).